A 451-amino-acid chain; its full sequence is Aminodeoxychorismate synthase component 1 (451 aa).

L-tryptophan-binding positions include Ser-34, 41–44, and 238–240; these read HNRF and PFS. Glu-256 serves as the catalytic Proton donor. Lys-272 (N6-(4-deoxychorismate)-lysine intermediate) is an active-site residue.

Belongs to the anthranilate synthase component I family. As to quaternary structure, monomer. Heterodimer consisting of two non-identical subunits: a glutamine amidotransferase subunit (PabA) and a aminodeoxychorismate synthase subunit (PabB). Mg(2+) is required as a cofactor.

It carries out the reaction chorismate + L-glutamine = 4-amino-4-deoxychorismate + L-glutamate. Its pathway is cofactor biosynthesis; tetrahydrofolate biosynthesis; 4-aminobenzoate from chorismate: step 1/2. Part of a heterodimeric complex that catalyzes the two-step biosynthesis of 4-amino-4-deoxychorismate (ADC), a precursor of p-aminobenzoate (PABA) and tetrahydrofolate. In the first step, a glutamine amidotransferase (PabA) generates ammonia as a substrate that, along with chorismate, is used in the second step, catalyzed by aminodeoxychorismate synthase (PabB) to produce ADC. In Klebsiella aerogenes (Enterobacter aerogenes), this protein is Aminodeoxychorismate synthase component 1 (pabB).